Reading from the N-terminus, the 274-residue chain is S-adenosylmethionine decarboxylase proenzyme (274 aa).

The Schiff-base intermediate with substrate; via pyruvic acid role is filled by S119. A Pyruvic acid (Ser); by autocatalysis modification is found at S119. The Proton acceptor; for processing activity role is filled by H124. Residue C147 is the Proton donor; for catalytic activity of the active site.

Belongs to the prokaryotic AdoMetDC family. Type 2 subfamily. As to quaternary structure, heterooctamer of four alpha and four beta chains arranged as a tetramer of alpha/beta heterodimers. It depends on pyruvate as a cofactor. Is synthesized initially as an inactive proenzyme. Formation of the active enzyme involves a self-maturation process in which the active site pyruvoyl group is generated from an internal serine residue via an autocatalytic post-translational modification. Two non-identical subunits are generated from the proenzyme in this reaction, and the pyruvate is formed at the N-terminus of the alpha chain, which is derived from the carboxyl end of the proenzyme. The post-translation cleavage follows an unusual pathway, termed non-hydrolytic serinolysis, in which the side chain hydroxyl group of the serine supplies its oxygen atom to form the C-terminus of the beta chain, while the remainder of the serine residue undergoes an oxidative deamination to produce ammonia and the pyruvoyl group blocking the N-terminus of the alpha chain.

The catalysed reaction is S-adenosyl-L-methionine + H(+) = S-adenosyl 3-(methylsulfanyl)propylamine + CO2. The protein operates within amine and polyamine biosynthesis; S-adenosylmethioninamine biosynthesis; S-adenosylmethioninamine from S-adenosyl-L-methionine: step 1/1. Its function is as follows. Catalyzes the decarboxylation of S-adenosylmethionine to S-adenosylmethioninamine (dcAdoMet), the propylamine donor required for the synthesis of the polyamines spermine and spermidine from the diamine putrescine. This chain is S-adenosylmethionine decarboxylase proenzyme, found in Clostridium acetobutylicum (strain ATCC 824 / DSM 792 / JCM 1419 / IAM 19013 / LMG 5710 / NBRC 13948 / NRRL B-527 / VKM B-1787 / 2291 / W).